The sequence spans 506 residues: Maturase K (506 aa).

It belongs to the intron maturase 2 family. MatK subfamily.

Its subcellular location is the plastid. The protein localises to the chloroplast. In terms of biological role, usually encoded in the trnK tRNA gene intron. Probably assists in splicing its own and other chloroplast group II introns. In Trifolium willdenovii (Tomcat clover), this protein is Maturase K.